The primary structure comprises 500 residues: MASVAQESAGSQRRLPPRHGALRGLLLLCLWLPSGRAALPPAAPLSELHAQLSGVEQLLEEFRRQLQQERPQEELELELRAGGGPQEDCPGPGSGGYSAMPDAIIRTKDSLAAGASFLRAPAAVRGWRQCVAACCSEPRCSVAVVELPRRPAPPAAVLGCYLFNCTARGRNVCKFALHSGYSSYSLSRAPDGAALATARASPRQEKDAPPLSKAGQDVVLHLPTDGVVLDGRESTDDHAIVQYEWALLQGDPSVDMKVPQSGTLKLSHLQEGTYTFQLTVTDTAGQRSSDNVSVTVLRAAYSTGGCLHTCSRYHFFCDDGCCIDITLACDGVQQCPDGSDEDFCQNLGLDRKMVTHTAASPALPRTTGPSEDAGGDSLVEKSQKATAPNKPPALSNTEKRNHSAFWGPESQIIPVMPDSSSSGKNRKEESYIFESKGDGGGGEHPAPETGAVLPLALGLAITALLLLMVACRLRLVKQKLKKARPITSEESDYLINGMYL.

An N-terminal signal peptide occupies residues methionine 1–alanine 37. The Extracellular segment spans residues alanine 38 to glycine 450. The MANSC domain occupies alanine 99 to tyrosine 184. 2 N-linked (GlcNAc...) asparagine glycosylation sites follow: asparagine 164 and asparagine 291. Residues proline 210–glycine 305 enclose the PKD domain. Positions threonine 309–glutamine 345 constitute an LDL-receptor class A domain. Intrachain disulfides connect cysteine 310–cysteine 322, cysteine 317–cysteine 335, and cysteine 329–cysteine 344. The disordered stretch occupies residues alanine 358–proline 445. The N-linked (GlcNAc...) asparagine glycan is linked to asparagine 401. Residues alanine 451–leucine 473 form a helical membrane-spanning segment. The Cytoplasmic segment spans residues arginine 474–leucine 500. The residue at position 491 (serine 491) is a Phosphoserine.

The protein belongs to the LDLR family.

It is found in the membrane. The sequence is that of Low-density lipoprotein receptor-related protein 11 (LRP11) from Homo sapiens (Human).